The chain runs to 1502 residues: Leucine-rich repeat-containing protein 9 (1502 aa).

LRR repeat units lie at residues 53–79 (FPNL…HFLK), 97–119 (CADL…LENL), 120–141 (LKLE…LDMM), 142–164 (QNLK…LDPN), 166–188 (QLER…NLAR), 224–247 (LQRL…TVVK), 296–320 (EHEL…KFHE), 699–721 (YSQI…ISRL), 722–744 (NGLR…SYLT), 746–764 (LEYL…GFKG), 765–790 (LGKL…ILRK), 792–814 (AIQL…VLKD), 822–849 (LTHL…RITQ), 894–916 (YTKI…LEKL), 917–938 (VNLR…LEHC), 939–960 (VNLE…LSKL), 961–983 (TKLR…VIES), 985–1009 (SHLH…GYKL), 1011–1030 (ELYL…SLKG), 1031–1053 (LNNL…NYRL), 1100–1123 (FTEL…PADH), 1124–1146 (FRNV…LIFL), 1147–1170 (PNIK…KSQS), 1209–1232 (MQSL…QLGR), 1234–1255 (RNLK…LENL), 1256–1278 (QFLR…SFAK), 1280–1301 (NSLV…LPPL), 1302–1325 (LKLR…KLEV), and 1327–1351 (PALV…LLVV). Residues 317–342 (KFHENNCDTEESNSQQSSERRKNNSD) are disordered. A compositionally biased stretch (polar residues) spans 1479–1496 (TQQSGQARSQQKHPFNQE). Positions 1479 to 1502 (TQQSGQARSQQKHPFNQENEGRCV) are disordered.

This Xenopus tropicalis (Western clawed frog) protein is Leucine-rich repeat-containing protein 9 (lrrc9).